The following is a 305-amino-acid chain: UDP-3-O-acyl-N-acetylglucosamine deacetylase (305 aa).

Residues histidine 77, histidine 234, and aspartate 238 each contribute to the Zn(2+) site. Histidine 261 functions as the Proton donor in the catalytic mechanism.

Belongs to the LpxC family. Zn(2+) serves as cofactor.

It catalyses the reaction a UDP-3-O-[(3R)-3-hydroxyacyl]-N-acetyl-alpha-D-glucosamine + H2O = a UDP-3-O-[(3R)-3-hydroxyacyl]-alpha-D-glucosamine + acetate. Its pathway is glycolipid biosynthesis; lipid IV(A) biosynthesis; lipid IV(A) from (3R)-3-hydroxytetradecanoyl-[acyl-carrier-protein] and UDP-N-acetyl-alpha-D-glucosamine: step 2/6. Functionally, catalyzes the hydrolysis of UDP-3-O-myristoyl-N-acetylglucosamine to form UDP-3-O-myristoylglucosamine and acetate, the committed step in lipid A biosynthesis. This Oleidesulfovibrio alaskensis (strain ATCC BAA-1058 / DSM 17464 / G20) (Desulfovibrio alaskensis) protein is UDP-3-O-acyl-N-acetylglucosamine deacetylase.